We begin with the raw amino-acid sequence, 26 residues long: Delta-conotoxin Am2766 (26 aa).

3 disulfides stabilise this stretch: Cys-1/Cys-16, Cys-8/Cys-20, and Cys-15/Cys-24. Glu-26 carries the glutamic acid 1-amide modification.

Expressed by the venom duct.

It localises to the secreted. In terms of biological role, delta-conotoxins bind to site 6 of voltage-gated sodium channels (Nav) and inhibit the inactivation process. This chain is Delta-conotoxin Am2766, found in Conus amadis (Amadis cone).